The primary structure comprises 1371 residues: Perilipin-4 (1371 aa).

A compositionally biased stretch (basic and acidic residues) spans 1–13 (MSAPDEGRRDPPK). Residues 1-22 (MSAPDEGRRDPPKPKGKTLGSF) form a disordered region. Ser25 and Ser31 each carry phosphoserine. Residues 37 to 86 (ANAHSSARARPAADPTGAPAAEAAQPQAQVAAHPEQTAPWTEKELQPSEK) form a disordered region. Low complexity predominate over residues 44–72 (RARPAADPTGAPAAEAAQPQAQVAAHPEQ). 27 tandem repeats follow at residues 109–141 (GVAS…VVSS), 142–174 (GVTG…TVST), 175–207 (GLTG…TVTT), 208–240 (GVMG…AVST), 241–273 (GLTG…TVCS), 274–306 (GVTG…TVCS), 307–339 (GVTG…TVCS), 340–372 (GVTG…TVCS), 373–405 (GVTG…TMST), 406–438 (GLTG…TVCS), 439–471 (GVTG…TVCS), 472–504 (GVTG…AVST), 505–537 (GLTG…TVCS), 538–570 (GVTS…TMST), 571–603 (GLTG…TVTT), 604–636 (GLVG…TIYS), 637–669 (GVTS…TFGS), 670–702 (GVTS…TVTT), 703–735 (GLMG…TVCS), 736–768 (GVTG…AVST), 769–801 (GLTG…AVCS), 802–834 (GVTG…TVCS), 835–867 (GVTG…TLGS), 868–900 (GVTG…AVST), 901–933 (GLTG…TVCS), 934–966 (GVTG…AVTT), and 967–999 (GVTG…TVFS). The interval 109–999 (GVASVVDVAK…LMGTKDTVFS (891 aa)) is 27 X 33 AA approximate tandem repeat. The segment covering 1060–1083 (PATSWGGLTSSRTTDNGGEQTALS) has biased composition (polar residues). Disordered stretches follow at residues 1060–1093 (PATS…SGIS) and 1240–1260 (QAPE…EDAA).

The protein belongs to the perilipin family.

It is found in the cell membrane. It localises to the cytoplasm. The protein localises to the lipid droplet. Functionally, may play a role in triacylglycerol packaging into adipocytes. May function as a coat protein involved in the biogenesis of lipid droplets. The protein is Perilipin-4 of Homo sapiens (Human).